Here is a 183-residue protein sequence, read N- to C-terminus: MTTIVSVRRNNKVVIAGDGQVSLGNTVMKGNARKVRRLYNNQVLAGFAGGTADAFTLFERFESKLQMHQGHLTKAAVELAKDWRSDRALRKLEALLAVADETASLIITGNGDVVQPENDLIAIGSGGAYAQAAATALLENTDLDAREIAEKALNIAGDICVFTNHHHTVEELESTVELPKPTA.

Residue threonine 2 is part of the active site. Na(+) contacts are provided by glycine 157, cysteine 160, and threonine 163.

This sequence belongs to the peptidase T1B family. HslV subfamily. A double ring-shaped homohexamer of HslV is capped on each side by a ring-shaped HslU homohexamer. The assembly of the HslU/HslV complex is dependent on binding of ATP.

The protein resides in the cytoplasm. It catalyses the reaction ATP-dependent cleavage of peptide bonds with broad specificity.. With respect to regulation, allosterically activated by HslU binding. Functionally, protease subunit of a proteasome-like degradation complex believed to be a general protein degrading machinery. The chain is ATP-dependent protease subunit HslV from Vibrio campbellii (strain ATCC BAA-1116).